Here is a 456-residue protein sequence, read N- to C-terminus: Protein king tubby (456 aa).

The tract at residues 111 to 202 is disordered; sequence HELEDEESSP…SNGAGGESEG (92 aa). The segment covering 120–152 has biased composition (polar residues); the sequence is PVTVIEQQQTAPHSANSTHSQRPSTTRQPSFND. S149 carries the phosphoserine modification.

It belongs to the TUB family.

Its subcellular location is the cytoplasm. It is found in the nucleus. It localises to the cell projection. The protein localises to the cilium membrane. The protein resides in the rhabdomere. This is Protein king tubby from Drosophila pseudoobscura pseudoobscura (Fruit fly).